Here is a 164-residue protein sequence, read N- to C-terminus: SsrA-binding protein (164 aa).

This sequence belongs to the SmpB family.

The protein resides in the cytoplasm. Functionally, required for rescue of stalled ribosomes mediated by trans-translation. Binds to transfer-messenger RNA (tmRNA), required for stable association of tmRNA with ribosomes. tmRNA and SmpB together mimic tRNA shape, replacing the anticodon stem-loop with SmpB. tmRNA is encoded by the ssrA gene; the 2 termini fold to resemble tRNA(Ala) and it encodes a 'tag peptide', a short internal open reading frame. During trans-translation Ala-aminoacylated tmRNA acts like a tRNA, entering the A-site of stalled ribosomes, displacing the stalled mRNA. The ribosome then switches to translate the ORF on the tmRNA; the nascent peptide is terminated with the 'tag peptide' encoded by the tmRNA and targeted for degradation. The ribosome is freed to recommence translation, which seems to be the essential function of trans-translation. This is SsrA-binding protein from Corynebacterium efficiens (strain DSM 44549 / YS-314 / AJ 12310 / JCM 11189 / NBRC 100395).